The sequence spans 255 residues: 5'-methylthioadenosine/S-adenosylhomocysteine nucleosidase (255 aa).

Glu-14 (proton acceptor) is an active-site residue. Substrate-binding positions include Gly-80, Leu-176, and 196–197 (ME). Asp-220 (proton donor) is an active-site residue.

It belongs to the PNP/UDP phosphorylase family. MtnN subfamily.

It catalyses the reaction S-adenosyl-L-homocysteine + H2O = S-(5-deoxy-D-ribos-5-yl)-L-homocysteine + adenine. The enzyme catalyses S-methyl-5'-thioadenosine + H2O = 5-(methylsulfanyl)-D-ribose + adenine. The catalysed reaction is 5'-deoxyadenosine + H2O = 5-deoxy-D-ribose + adenine. The protein operates within amino-acid biosynthesis; L-methionine biosynthesis via salvage pathway; S-methyl-5-thio-alpha-D-ribose 1-phosphate from S-methyl-5'-thioadenosine (hydrolase route): step 1/2. Catalyzes the irreversible cleavage of the glycosidic bond in both 5'-methylthioadenosine (MTA) and S-adenosylhomocysteine (SAH/AdoHcy) to adenine and the corresponding thioribose, 5'-methylthioribose and S-ribosylhomocysteine, respectively. Also cleaves 5'-deoxyadenosine, a toxic by-product of radical S-adenosylmethionine (SAM) enzymes, into 5-deoxyribose and adenine. This Mycobacterium bovis (strain ATCC BAA-935 / AF2122/97) protein is 5'-methylthioadenosine/S-adenosylhomocysteine nucleosidase (mtnN).